Reading from the N-terminus, the 629-residue chain is Solute carrier family 22 member 14 (629 aa).

The interval 1–21 (MKEDQNYKTAFGSQNSRDTHR) is disordered. Over 1-67 (MKEDQNYKTA…IGEFGTFQWR (67 aa)) the chain is Cytoplasmic. A compositionally biased stretch (polar residues) spans 7–16 (YKTAFGSQNS). A helical transmembrane segment spans residues 68 to 88 (LVVLTFIPSILSTFFIFSHHF). At 89-183 (LLTAQRPYCN…LVCGNEPNKE (95 aa)) the chain is on the extracellular side. Residues N98, N116, N124, and N149 are each glycosylated (N-linked (GlcNAc...) asparagine). The chain crosses the membrane as a helical span at residues 184–204 (NGLTVFLSGVLTGSLLFGFLS). The Cytoplasmic portion of the chain corresponds to 205 to 209 (DKLGR). Residues 210–230 (YPIILLSLLGFLIFGFGTAFV) traverse the membrane as a helical segment. The Extracellular portion of the chain corresponds to 231 to 240 (SSFYQYLFFR). Residues 241 to 261 (FFVAQASVGYAICSVSLVMEW) form a helical membrane-spanning segment. The Cytoplasmic segment spans residues 262–269 (LVGEHRAQ). A helical membrane pass occupies residues 270-290 (AVILQHSFLTIGVILLTGLAY). Residues 291 to 295 (KVVHW) lie on the Extracellular side of the membrane. A helical transmembrane segment spans residues 296 to 316 (RLLCLLGGMPMFPLICNIWVL). At 317 to 378 (RESPRWLMVR…DFCTNQHLFK (62 aa)) the chain is on the cytoplasmic side. The helical transmembrane segment at 379–399 (VVLAIGCVWFTVSYISFTLNL) threads the bilayer. The Extracellular segment spans residues 400-409 (KMNDFGLDVY). A helical membrane pass occupies residues 410–430 (FVQMVRSIVAVPARLCCIILL). The Cytoplasmic portion of the chain corresponds to 431–436 (EYFGRK). The chain crosses the membrane as a helical span at residues 437-457 (WALNLTLFLVTSMCLFLLFLP). At 458 to 463 (QEPKST) the chain is on the extracellular side. Residues 464 to 484 (IILTLMLAEFSMAGTLSIFFI) traverse the membrane as a helical segment. The Cytoplasmic portion of the chain corresponds to 485–496 (YTAELLPTVLRS). Residues 497–517 (TGLGMVSLAWVAGAISSVAIF) traverse the membrane as a helical segment. Residues 518 to 523 (KQTKTQ) are Extracellular-facing. The helical transmembrane segment at 524–544 (LPIFFCCLCCVLALCFSSLVP) threads the bilayer. The Cytoplasmic segment spans residues 545-629 (ETGSQSLRDS…PVQSLKAQPP (85 aa)).

Belongs to the major facilitator (TC 2.A.1) superfamily. Organic cation transporter (TC 2.A.1.19) family. As to expression, testis-specific (at protein level). Specifically expressed in male germ cells (at protein level).

The protein localises to the mitochondrion inner membrane. It localises to the cell projection. Its subcellular location is the cilium. The protein resides in the flagellum membrane. It catalyses the reaction riboflavin(in) = riboflavin(out). Its function is as follows. Riboflavin transporter localized at the inner mitochondrial membrane of the spermatozoa midpiece, which is required for male fertility. SLC22A14-mediated riboflavin transport is essential for spermatozoa energy generation and motility: riboflavin is the precursor of FMN and FAD, which are coenzymes of many enzymes in the TCA cycle (the citric acid cycle) in mitochondria. Required for sperm motility and normal sperm flagellar structure. The protein is Solute carrier family 22 member 14 of Mus musculus (Mouse).